The following is a 314-amino-acid chain: Putative integrase/recombinase y4rB (314 aa).

Residues 2–79 (STFRQAVQEY…YVRVFARYRA (78 aa)) form the Core-binding (CB) domain. The region spanning 100–304 (ARPYLYSKED…SPELMKEAMR (205 aa)) is the Tyr recombinase domain. Residues Arg147, Lys172, His248, Arg251, and His282 contribute to the active site. The active-site O-(3'-phospho-DNA)-tyrosine intermediate is Tyr291.

This sequence belongs to the 'phage' integrase family.

This chain is Putative integrase/recombinase y4rB, found in Sinorhizobium fredii (strain NBRC 101917 / NGR234).